The sequence spans 591 residues: V-type ATP synthase alpha chain (591 aa).

233–240 (GPFGAGKT) is a binding site for ATP.

The protein belongs to the ATPase alpha/beta chains family.

It catalyses the reaction ATP + H2O + 4 H(+)(in) = ADP + phosphate + 5 H(+)(out). Produces ATP from ADP in the presence of a proton gradient across the membrane. The V-type alpha chain is a catalytic subunit. This chain is V-type ATP synthase alpha chain, found in Streptococcus pyogenes serotype M28 (strain MGAS6180).